Consider the following 318-residue polypeptide: Pantothenate kinase (318 aa).

Position 96–103 (96–103 (GSVAVGKS)) interacts with ATP.

This sequence belongs to the prokaryotic pantothenate kinase family.

Its subcellular location is the cytoplasm. The enzyme catalyses (R)-pantothenate + ATP = (R)-4'-phosphopantothenate + ADP + H(+). It participates in cofactor biosynthesis; coenzyme A biosynthesis; CoA from (R)-pantothenate: step 1/5. In Coxiella burnetii (strain RSA 493 / Nine Mile phase I), this protein is Pantothenate kinase.